The primary structure comprises 755 residues: Ligand-dependent nuclear receptor-interacting factor 1 (755 aa).

Lys-270 participates in a covalent cross-link: Glycyl lysine isopeptide (Lys-Gly) (interchain with G-Cter in SUMO2). Residues Ser-391, Ser-419, and Ser-425 each carry the phosphoserine modification. Residue Lys-436 forms a Glycyl lysine isopeptide (Lys-Gly) (interchain with G-Cter in SUMO2) linkage. Positions 565–569 match the PxVxL motif motif; that stretch reads LRVCL. Phosphoserine is present on Ser-584. Residue Lys-590 forms a Glycyl lysine isopeptide (Lys-Gly) (interchain with G-Cter in SUMO2) linkage. Short sequence motifs (nuclear localization signal) lie at residues 612–615 and 625–628; these read KKRK and KKIK. The interval 665–698 is disordered; the sequence is IVTSHSTTREDKRTEAEHCSHEKQEKGTLSSSTS. Residues 671–690 show a composition bias toward basic and acidic residues; sequence TTREDKRTEAEHCSHEKQEK. Positions 678–711 form a coiled coil; that stretch reads TEAEHCSHEKQEKGTLSSSTSFEQSTFLNKNFME. Lys-687 is covalently cross-linked (Glycyl lysine isopeptide (Lys-Gly) (interchain with G-Cter in SUMO2)). Thr-717 is subject to Phosphothreonine.

Belongs to the LRIF1 family. As to quaternary structure, interacts with RARA. Interacts with SMCHD1; leading to recruitment to inactivated chromosome X in females. Interacts (via PxVxL motif) with HP1 (CBX1/HP1-beta, CBX3/HP1-gamma and CBX5/HP1-alpha).

Its subcellular location is the chromosome. It localises to the nucleus matrix. Together with SMCHD1, involved in chromosome X inactivation in females by promoting the compaction of heterochromatin. Also able to repress the ligand-induced transcriptional activity of retinoic acid receptor alpha (RARA), possibly through direct recruitment of histone deacetylases. The sequence is that of Ligand-dependent nuclear receptor-interacting factor 1 (Lrif1) from Mus musculus (Mouse).